A 146-amino-acid chain; its full sequence is Hemoglobin subunit beta-1 (146 aa).

Residues 2–146 (HWTAEEKALI…VAHALARRYH (145 aa)) form the Globin domain. Residue histidine 92 participates in heme b binding.

It belongs to the globin family. As to quaternary structure, heterotetramer of two alpha chains and two beta chains. As to expression, red blood cells.

Functionally, involved in oxygen transport from the lung to the various peripheral tissues. The protein is Hemoglobin subunit beta-1 of Saara hardwickii (Indian spiny-tailed lizard).